A 244-amino-acid polypeptide reads, in one-letter code: 5-oxoprolinase subunit A (244 aa).

It belongs to the LamB/PxpA family. In terms of assembly, forms a complex composed of PxpA, PxpB and PxpC.

The enzyme catalyses 5-oxo-L-proline + ATP + 2 H2O = L-glutamate + ADP + phosphate + H(+). Catalyzes the cleavage of 5-oxoproline to form L-glutamate coupled to the hydrolysis of ATP to ADP and inorganic phosphate. The protein is 5-oxoprolinase subunit A of Salmonella dublin (strain CT_02021853).